The primary structure comprises 247 residues: 2,3-bisphosphoglycerate-dependent phosphoglycerate mutase (247 aa).

Substrate contacts are provided by residues 7-14 (RHGESEWN), 20-21 (TG), Arg59, 86-89 (ERHY), Lys97, 113-114 (RR), and 182-183 (GN). His8 functions as the Tele-phosphohistidine intermediate in the catalytic mechanism. Glu86 serves as the catalytic Proton donor/acceptor.

The protein belongs to the phosphoglycerate mutase family. BPG-dependent PGAM subfamily.

The enzyme catalyses (2R)-2-phosphoglycerate = (2R)-3-phosphoglycerate. It functions in the pathway carbohydrate degradation; glycolysis; pyruvate from D-glyceraldehyde 3-phosphate: step 3/5. Catalyzes the interconversion of 2-phosphoglycerate and 3-phosphoglycerate. This is 2,3-bisphosphoglycerate-dependent phosphoglycerate mutase from Treponema denticola (strain ATCC 35405 / DSM 14222 / CIP 103919 / JCM 8153 / KCTC 15104).